The primary structure comprises 387 residues: Cysteine desulfurase IscS (387 aa).

Pyridoxal 5'-phosphate contacts are provided by residues 73 to 74, asparagine 155, glutamine 183, and 203 to 205; these read AT and SAH. An N6-(pyridoxal phosphate)lysine modification is found at lysine 206. Threonine 241 contacts pyridoxal 5'-phosphate. The active-site Cysteine persulfide intermediate is the cysteine 328. [2Fe-2S] cluster is bound at residue cysteine 328.

It belongs to the class-V pyridoxal-phosphate-dependent aminotransferase family. NifS/IscS subfamily. In terms of assembly, homodimer. Forms a heterotetramer with IscU, interacts with other sulfur acceptors. Pyridoxal 5'-phosphate is required as a cofactor.

It localises to the cytoplasm. It catalyses the reaction (sulfur carrier)-H + L-cysteine = (sulfur carrier)-SH + L-alanine. It functions in the pathway cofactor biosynthesis; iron-sulfur cluster biosynthesis. Master enzyme that delivers sulfur to a number of partners involved in Fe-S cluster assembly, tRNA modification or cofactor biosynthesis. Catalyzes the removal of elemental sulfur atoms from cysteine to produce alanine. Functions as a sulfur delivery protein for Fe-S cluster synthesis onto IscU, an Fe-S scaffold assembly protein, as well as other S acceptor proteins. The sequence is that of Cysteine desulfurase IscS from Helicobacter pylori (strain P12).